The primary structure comprises 186 residues: Ribosome-recycling factor (186 aa).

Residues 135-164 (DGMDDLKKAEKDGEIGQDESRAQSERVQKM) form a disordered region.

This sequence belongs to the RRF family.

The protein localises to the cytoplasm. In terms of biological role, responsible for the release of ribosomes from messenger RNA at the termination of protein biosynthesis. May increase the efficiency of translation by recycling ribosomes from one round of translation to another. The sequence is that of Ribosome-recycling factor from Rhizobium meliloti (strain 1021) (Ensifer meliloti).